A 316-amino-acid chain; its full sequence is Ribosomal RNA small subunit methyltransferase H (316 aa).

S-adenosyl-L-methionine is bound by residues 35-37 (GGH), Asp55, Tyr79, Asp100, and Gln107.

Belongs to the methyltransferase superfamily. RsmH family.

The protein resides in the cytoplasm. The catalysed reaction is cytidine(1402) in 16S rRNA + S-adenosyl-L-methionine = N(4)-methylcytidine(1402) in 16S rRNA + S-adenosyl-L-homocysteine + H(+). Its function is as follows. Specifically methylates the N4 position of cytidine in position 1402 (C1402) of 16S rRNA. In Nitrosospira multiformis (strain ATCC 25196 / NCIMB 11849 / C 71), this protein is Ribosomal RNA small subunit methyltransferase H.